The primary structure comprises 118 residues: MKNKYIEQFEAKQIEGKNVPDFRAGDTLKLAIRIKEGDKTRIQNFEGICIARRGNGVSETFIVRKMGANNVGVERIFPIYSESLESITVLRRGRVRRARLFYLRDRRGKAARIKELKK.

The protein belongs to the bacterial ribosomal protein bL19 family.

Its function is as follows. This protein is located at the 30S-50S ribosomal subunit interface and may play a role in the structure and function of the aminoacyl-tRNA binding site. The polypeptide is Large ribosomal subunit protein bL19 (Campylobacter jejuni subsp. jejuni serotype O:6 (strain 81116 / NCTC 11828)).